The primary structure comprises 91 residues: Small ribosomal subunit protein uS15 (91 aa).

This sequence belongs to the universal ribosomal protein uS15 family. As to quaternary structure, part of the 30S ribosomal subunit. Forms a bridge to the 50S subunit in the 70S ribosome, contacting the 23S rRNA.

In terms of biological role, one of the primary rRNA binding proteins, it binds directly to 16S rRNA where it helps nucleate assembly of the platform of the 30S subunit by binding and bridging several RNA helices of the 16S rRNA. Its function is as follows. Forms an intersubunit bridge (bridge B4) with the 23S rRNA of the 50S subunit in the ribosome. The protein is Small ribosomal subunit protein uS15 of Amoebophilus asiaticus (strain 5a2).